The sequence spans 393 residues: Formate-dependent phosphoribosylglycinamide formyltransferase (393 aa).

N(1)-(5-phospho-beta-D-ribosyl)glycinamide-binding positions include Glu22–Leu23 and Glu82. ATP-binding positions include Arg114, Lys155, Ser160 to Gln165, Glu195 to Ile198, and Glu203. The ATP-grasp domain maps to Arg119–Leu308. Residues Glu267 and Glu279 each coordinate Mg(2+). N(1)-(5-phospho-beta-D-ribosyl)glycinamide is bound by residues Asp286, Lys356, and Arg363 to Arg364.

The protein belongs to the PurK/PurT family. In terms of assembly, homodimer.

The enzyme catalyses N(1)-(5-phospho-beta-D-ribosyl)glycinamide + formate + ATP = N(2)-formyl-N(1)-(5-phospho-beta-D-ribosyl)glycinamide + ADP + phosphate + H(+). Its pathway is purine metabolism; IMP biosynthesis via de novo pathway; N(2)-formyl-N(1)-(5-phospho-D-ribosyl)glycinamide from N(1)-(5-phospho-D-ribosyl)glycinamide (formate route): step 1/1. Functionally, involved in the de novo purine biosynthesis. Catalyzes the transfer of formate to 5-phospho-ribosyl-glycinamide (GAR), producing 5-phospho-ribosyl-N-formylglycinamide (FGAR). Formate is provided by PurU via hydrolysis of 10-formyl-tetrahydrofolate. This Pseudomonas syringae pv. tomato (strain ATCC BAA-871 / DC3000) protein is Formate-dependent phosphoribosylglycinamide formyltransferase.